A 473-amino-acid chain; its full sequence is 3-isopropylmalate dehydratase large subunit (473 aa).

Positions 351, 414, and 417 each coordinate [4Fe-4S] cluster.

The protein belongs to the aconitase/IPM isomerase family. LeuC type 1 subfamily. Heterodimer of LeuC and LeuD. [4Fe-4S] cluster serves as cofactor.

It catalyses the reaction (2R,3S)-3-isopropylmalate = (2S)-2-isopropylmalate. It functions in the pathway amino-acid biosynthesis; L-leucine biosynthesis; L-leucine from 3-methyl-2-oxobutanoate: step 2/4. Functionally, catalyzes the isomerization between 2-isopropylmalate and 3-isopropylmalate, via the formation of 2-isopropylmaleate. This Paracidovorax citrulli (strain AAC00-1) (Acidovorax citrulli) protein is 3-isopropylmalate dehydratase large subunit.